A 446-amino-acid chain; its full sequence is Dual specificity mitogen-activated protein kinase kinase 2 (446 aa).

A compositionally biased stretch (low complexity) spans 27–42 (SSGSSAGLGFQGQSQQ). Residues 27–51 (SSGSSAGLGFQGQSQQHSTVNSMQG) form a disordered region. The Protein kinase domain occupies 149–414 (LKDLGEIGRG…YKELLKHPFI (266 aa)). Residues 155–163 (IGRGAYGSV) and lysine 178 contribute to the ATP site. The Proton acceptor role is filled by aspartate 276. The residue at position 304 (serine 304) is a Phosphoserine; by RAF. A Phosphothreonine; by RAF modification is found at threonine 308.

This sequence belongs to the protein kinase superfamily. STE Ser/Thr protein kinase family. MAP kinase kinase subfamily. In terms of processing, MAPKK is itself dependent on Ser/Thr phosphorylation for activity catalyzed by MAP kinase kinase kinases. In terms of tissue distribution, expressed abundantly in the adult brain and muscle.

The enzyme catalyses L-seryl-[protein] + ATP = O-phospho-L-seryl-[protein] + ADP + H(+). It carries out the reaction L-threonyl-[protein] + ATP = O-phospho-L-threonyl-[protein] + ADP + H(+). The catalysed reaction is L-tyrosyl-[protein] + ATP = O-phospho-L-tyrosyl-[protein] + ADP + H(+). Catalyzes the concomitant phosphorylation of a threonine and a tyrosine residue in a Thr-Glu-Tyr sequence located in MAP kinases. In Xenopus laevis (African clawed frog), this protein is Dual specificity mitogen-activated protein kinase kinase 2 (map2k2).